We begin with the raw amino-acid sequence, 137 residues long: Fluoride-specific ion channel FluC (137 aa).

The next 4 helical transmembrane spans lie at 11–31 (IAVSLGAIAGALSRYYLSLWF), 42–62 (GTLFINITGCLAMGFFYALAL), 75–95 (LIAVGFLGAYTTFSTYALDTF), and 107–127 (GFYWAGSTILGVISIQIGIIL). 2 residues coordinate Na(+): Gly-82 and Thr-85.

This sequence belongs to the fluoride channel Fluc/FEX (TC 1.A.43) family.

Its subcellular location is the cell inner membrane. It carries out the reaction fluoride(in) = fluoride(out). Its activity is regulated as follows. Na(+) is not transported, but it plays an essential structural role and its presence is essential for fluoride channel function. Its function is as follows. Fluoride-specific ion channel. Important for reducing fluoride concentration in the cell, thus reducing its toxicity. This Trichormus variabilis (strain ATCC 29413 / PCC 7937) (Anabaena variabilis) protein is Fluoride-specific ion channel FluC.